The chain runs to 323 residues: Cuticle collagen 39 (323 aa).

Residues 1–28 (MTGPTCLAVVAGISGVFVFGALFSVAQI) form the signal peptide. The span at 80 to 89 (QCNCGPQASN) shows a compositional bias: polar residues. The tract at residues 80–293 (QCNCGPQASN…GAAEQGYRHR (214 aa)) is disordered. 3 triple-helical region regions span residues 93-125 (GPPG…AGPK), 138-200 (GSPG…GGQR), and 203-265 (GLPG…PGAD). The span at 108–117 (GQPGGAGNPG) shows a compositional bias: gly residues. Residues 136-146 (PAGSPGPAGAP) show a composition bias toward low complexity. A compositionally biased stretch (gly residues) spans 159–168 (GHPGQGGSQG). The span at 169-191 (PAGPRGPAGDAGAPGQVGAPGNP) shows a compositional bias: low complexity. A compositionally biased stretch (gly residues) spans 224–233 (GQSGGQGQQG). Over residues 234–267 (PAGPAGPDGQPGQPGQDGQAGAPGNDGAPGADAA) the composition is skewed to low complexity.

This sequence belongs to the cuticular collagen family. As to quaternary structure, collagen polypeptide chains are complexed within the cuticle by disulfide bonds and other types of covalent cross-links.

Functionally, nematode cuticles are composed largely of collagen-like proteins. The cuticle functions both as an exoskeleton and as a barrier to protect the worm from its environment. The chain is Cuticle collagen 39 (col-39) from Caenorhabditis elegans.